We begin with the raw amino-acid sequence, 87 residues long: Acyl-CoA-binding protein (87 aa).

The residue at position 2 (Ser2) is an N-acetylserine. Residues 2 to 87 (SQAEFEKAAE…VEELKKKYGI (86 aa)) enclose the ACB domain. Position 8 is an N6-acetyllysine; alternate (Lys8). Lys8 carries the N6-succinyllysine; alternate modification. Lys14 lines the an acyl-CoA pocket. At Lys17 the chain carries N6-succinyllysine. Lys19 is subject to N6-acetyllysine. Tyr29 is modified (phosphotyrosine). Residues 29–33 (YSHYK), Lys51, Lys55, and Tyr74 each bind an acyl-CoA. Position 51 is an N6-acetyllysine (Lys51). Lys55 is subject to N6-acetyllysine; alternate. Lys55 is modified (N6-succinyllysine; alternate). An N6-(2-hydroxyisobutyryl)lysine; alternate modification is found at Lys55. Residue Lys55 is modified to N6-malonyllysine; alternate. Lys77 carries the post-translational modification N6-acetyllysine; alternate. Lys77 is modified (N6-succinyllysine; alternate).

It belongs to the ACBP family. As to quaternary structure, monomer.

The protein resides in the endoplasmic reticulum. It localises to the golgi apparatus. Its function is as follows. Binds medium- and long-chain acyl-CoA esters with very high affinity and may function as an intracellular carrier of acyl-CoA esters. It is also able to displace diazepam from the benzodiazepine (BZD) recognition site located on the GABA type A receptor. It is therefore possible that this protein also acts as a neuropeptide to modulate the action of the GABA receptor. Functionally, DBI(32-86) has antibacterial properties. This chain is Acyl-CoA-binding protein (DBI), found in Sus scrofa (Pig).